The sequence spans 484 residues: BPI fold-containing family B member 1 (484 aa).

The signal sequence occupies residues Met1–Ala21. Asn48 carries an N-linked (GlcNAc...) asparagine glycan. Residues Cys158 and Cys201 are joined by a disulfide bond. N-linked (GlcNAc...) asparagine glycans are attached at residues Asn264 and Asn401.

It belongs to the BPI/LBP/Plunc superfamily. Plunc family. Detected in duodenum mucosal crypts of cholera patients, near Paneth cells (at protein level). Detected in trachea, nasal septal epithelium and lung.

Its subcellular location is the secreted. May play a role in innate immunity in mouth, nose and lungs. Binds bacterial lipopolysaccharide (LPS) and modulates the cellular responses to LPS. This chain is BPI fold-containing family B member 1 (BPIFB1), found in Homo sapiens (Human).